We begin with the raw amino-acid sequence, 391 residues long: Elongation factor Tu (391 aa).

Residues 10-201 (KPHVNIGTIG…AVDDYIPTPA (192 aa)) enclose the tr-type G domain. Residues 19–26 (GHVDHGKT) form a G1 region. 19–26 (GHVDHGKT) is a GTP binding site. Thr26 lines the Mg(2+) pocket. Residues 55–59 (GITIS) form a G2 region. The segment at 76–79 (DCPG) is G3. GTP is bound by residues 76-80 (DCPGH) and 131-134 (NKVD). The tract at residues 131–134 (NKVD) is G4. Residues 169-171 (SAL) are G5.

This sequence belongs to the TRAFAC class translation factor GTPase superfamily. Classic translation factor GTPase family. EF-Tu/EF-1A subfamily. In terms of assembly, monomer.

It is found in the cytoplasm. The catalysed reaction is GTP + H2O = GDP + phosphate + H(+). In terms of biological role, GTP hydrolase that promotes the GTP-dependent binding of aminoacyl-tRNA to the A-site of ribosomes during protein biosynthesis. This is Elongation factor Tu from Dinoroseobacter shibae (strain DSM 16493 / NCIMB 14021 / DFL 12).